The sequence spans 373 residues: Galactoside alpha-(1,2)-fucosyltransferase 1 (373 aa).

At 1–12 (MWPPSRRQLCLA) the chain is on the cytoplasmic side. The chain crosses the membrane as a helical; Signal-anchor for type II membrane protein span at residues 13–29 (FLLVCALSAFSFLLHLH). The Lumenal portion of the chain corresponds to 30 to 373 (QDLFRNGLAL…GSWRPWRFLG (344 aa)). 3 N-linked (GlcNAc...) asparagine glycosylation sites follow: Asn-66, Asn-301, and Asn-327.

The protein belongs to the glycosyltransferase 11 family. Brain.

The protein resides in the golgi apparatus. Its subcellular location is the golgi stack membrane. The catalysed reaction is a beta-D-galactosyl-(1-&gt;4)-N-acetyl-beta-D-glucosaminyl derivative + GDP-beta-L-fucose = an alpha-L-Fuc-(1-&gt;2)-beta-D-Gal-(1-&gt;4)-beta-D-GlcNAc derivative + GDP + H(+). It carries out the reaction a ganglioside GA1 + GDP-beta-L-fucose = a ganglioside Fuc-GA1 + GDP + H(+). The enzyme catalyses a beta-D-Gal-(1-&gt;3)-beta-D-GlcNAc-(1-&gt;3)-beta-D-Gal-(1-&gt;4)-beta-D-Glc-(1&lt;-&gt;1')-Cer(d18:1(4E)) + GDP-beta-L-fucose = alpha-L-fucosyl-(1-&gt;2)- beta-D-galactosyl-(1-&gt;3)-N-acetyl-beta-D-glucosaminyl-(1-&gt;3)-beta-D-galactosyl-(1-&gt;4)-beta-D-glucosyl-(1&lt;-&gt;1')-N-acylsphing-4-enine + GDP + H(+). It catalyses the reaction a neolactoside nLc4Cer(d18:1(4E)) + GDP-beta-L-fucose = a neolactoside IV(2)-alpha-Fuc-nLc4Cer(d18:1(4E)) + GDP + H(+). The catalysed reaction is a ganglioside GM1 + GDP-beta-L-fucose = a ganglioside Fuc-GM1 + GDP + H(+). It carries out the reaction beta-D-galactosyl-(1-&gt;3)-N-acetyl-D-galactosamine + GDP-beta-L-fucose = alpha-L-fucosyl-(1-&gt;2)-beta-D-galactosyl-(1-&gt;3)-N-acetyl-D-galactosamine + GDP + H(+). Its pathway is protein modification; protein glycosylation. Its function is as follows. Catalyzes the transfer of L-fucose, from a guanosine diphosphate-beta-L-fucose, to the terminal galactose residue of glycoconjugates through an alpha(1,2) linkage leading to H antigen synthesis that is an intermediate substrate in the synthesis of ABO blood group antigens. H antigen is essential for maturation of the glomerular layer of the main olfactory bulb, in cell migration and early cell-cell contacts during tumor associated angiogenesis. Preferentially fucosylates soluble lactose and to a lesser extent fucosylates glycolipids gangliosides GA1 and GM1a. The protein is Galactoside alpha-(1,2)-fucosyltransferase 1 of Oryctolagus cuniculus (Rabbit).